The sequence spans 133 residues: MKFNIDHYIASVLQWILNIALIILSIVLSIFLINETITFIQYIFSTKEYTSYKLVESIIVYFLYFEFIALIIKYFKSNYHFPLRYFIYIGITALIRLIIVSHEEPMETLLYAGAILILVIALYISNMRDLRKE.

A run of 4 helical transmembrane segments spans residues 13–33 (LQWI…IFLI), 55–75 (VESI…IKYF), 81–101 (FPLR…IIVS), and 105–125 (PMET…LYIS).

It belongs to the PsiE family.

The protein resides in the cell membrane. This chain is Protein PsiE homolog, found in Bacillus cereus (strain ATCC 10987 / NRS 248).